The chain runs to 245 residues: Eukaryotic translation initiation factor 6 (245 aa).

Phosphoserine; by CK1 is present on residues serine 174 and serine 175.

The protein belongs to the eIF-6 family. In terms of assembly, monomer. Associates with the 60S ribosomal subunit. Phosphorylation at Ser-174 and Ser-175 promotes nuclear export.

The protein resides in the cytoplasm. The protein localises to the nucleus. It is found in the nucleolus. In terms of biological role, binds to the 60S ribosomal subunit and prevents its association with the 40S ribosomal subunit to form the 80S initiation complex in the cytoplasm. Is also involved in ribosome biogenesis. Associates with pre-60S subunits in the nucleus and is involved in its nuclear export. This chain is Eukaryotic translation initiation factor 6, found in Candida albicans (strain SC5314 / ATCC MYA-2876) (Yeast).